The chain runs to 234 residues: MRLGMVIDLQKCVGCGGCSLACKTENNTNDGIHWSHHIATTEGTFPDVKYTYIPTLCNHCDDAPCVKVCPTGAMHKDKRGLTLQNNDECIGCKKCMNACPYGVISFNAATPHRRWQDDSEVVANGTVSPLMLLKRTGATATPNENPERGDTYPMIRPKRTTEKCTFCDHRLDKGLNPACVDACPSEARVIGDLDDPQSKVSQLIKLHKPMQLKPEAGTGPRVFYIRSFGVKTAY.

4Fe-4S ferredoxin-type domains follow at residues 3 to 32 (LGMV…NDGI), 48 to 79 (VKYT…KDKR), and 80 to 109 (GLTL…FNAA). [4Fe-4S] cluster-binding residues include Cys-12, Cys-15, Cys-18, Cys-22, Cys-57, Cys-60, Cys-65, Cys-69, Cys-89, Cys-92, Cys-95, Cys-99, Cys-164, Cys-167, Cys-179, and Cys-183.

In terms of assembly, heterodimer composed of one large subunit (ArrA) and one small subunit (ArrB). Requires [4Fe-4S] cluster as cofactor.

The protein resides in the periplasm. Its activity is regulated as follows. Phosphate is a competitive inhibitor. Its function is as follows. Component of the arsenate respiratory reductase (Arr) complex, which catalyzes the reduction of arsenate (As(V)) to arsenite (As(III)). ArrB is probably the electron transfer subunit. The periplasmic localization of this complex may allow the cell to couple arsenate reduction to energy production before arsenate can be transported to the cell cytoplasm and enter the ars detoxification pathway, an energy-requiring process. The sequence is that of Arsenate respiratory reductase iron-sulfur subunit ArrB from Shewanella sp. (strain ANA-3).